The primary structure comprises 144 residues: uncharacterized protein (144 aa).

This is an uncharacterized protein from Archaeoglobus fulgidus (strain ATCC 49558 / DSM 4304 / JCM 9628 / NBRC 100126 / VC-16).